We begin with the raw amino-acid sequence, 548 residues long: Glucan 1,4-alpha-maltotetraohydrolase (548 aa).

An N-terminal signal peptide occupies residues methionine 1–alanine 21. Residues aspartate 22, glutamine 23, histidine 34, aspartate 37, and glutamate 38 each coordinate Ca(2+). Tyrosine 99–phenylalanine 100 is a substrate binding site. Position 137 (asparagine 137) interacts with Ca(2+). Histidine 138 lines the substrate pocket. Cysteine 161 and cysteine 171 are joined by a disulfide. Positions 172 and 175 each coordinate Ca(2+). Phenylalanine 177–aspartate 181 contributes to the substrate binding site. Aspartate 183 lines the Ca(2+) pocket. Residue arginine 212 coordinates substrate. The Nucleophile role is filled by aspartate 214. Arginine 217–glycine 218 contacts substrate. Ca(2+) is bound at residue glycine 218. Cysteine 237 and cysteine 272 are joined by a disulfide. The active-site Proton donor is the glutamate 240. Substrate-binding residues include histidine 314 and glutamine 326. In terms of domain architecture, CBM20 spans glycine 446–leucine 548. Over residues glutamine 529–alanine 542 the composition is skewed to polar residues. Residues glutamine 529–leucine 548 are disordered.

The protein belongs to the glycosyl hydrolase 13 family. Monomer. Requires Ca(2+) as cofactor.

The protein resides in the secreted. The enzyme catalyses Hydrolysis of (1-&gt;4)-alpha-D-glucosidic linkages in amylaceous polysaccharides, to remove successive maltotetraose residues from the non-reducing chain ends.. It functions in the pathway glycan degradation; starch degradation. The polypeptide is Glucan 1,4-alpha-maltotetraohydrolase (amyP) (Stutzerimonas stutzeri (Pseudomonas stutzeri)).